Here is a 499-residue protein sequence, read N- to C-terminus: DAZ protein 1 (499 aa).

A disordered region spans residues 1–29 (MMSPPLRYQKDQQNQQHQQNQSQQAAHQM). Residues 12–28 (QQNQQHQQNQSQQAAHQ) show a composition bias toward low complexity. The RRM domain maps to 66–144 (PNRIFVGGFP…SRKLNLGPAI (79 aa)). Residues 195-224 (FVYPPLRSQDQSRQQSEQQTTPQNSPTNLQ) show a composition bias toward low complexity. Disordered stretches follow at residues 195–304 (FVYP…NNGG) and 406–499 (YPGN…TKNN). The region spanning 214–236 (TTPQNSPTNLQHQQSPQVFFGGD) is the DAZ domain. A compositionally biased stretch (basic and acidic residues) spans 251 to 262 (EKSEVSPEKHES). Residues 263–279 (VSPQPLLPNQNVLNTQY) show a composition bias toward polar residues. Residues 280 to 304 (SQGQQQWNSNVQQQQQQQMDSNNGG) are compositionally biased toward low complexity. Over residues 406 to 425 (YPGNFSQQHTMGNNENTFSL) the composition is skewed to polar residues. The span at 438 to 447 (KPSECQDKKT) shows a compositional bias: basic and acidic residues. The span at 480 to 499 (LSPLSASLQSLAISSPTKNN) shows a compositional bias: low complexity.

The protein belongs to the RRM DAZ family. In terms of tissue distribution, germline specific. More strongly expressed during oogenesis than during spermatogenesis. During the larval stages, it is more abundant at the distal region than the proximal region of the gonad. In young adult hermaphrodites, it is expressed at a very low level in the distal mitotic region of the gonad, and begins to accumulate in the meiotic transition zone. Highly expressed in the proximal pachytene region. Not expressed in mature oocytes. Not expressed in the spermatheca. Weakly or not expressed in the germline of adult males.

Its function is as follows. RNA-binding protein that plays a central role in oogenesis, but not for spermatogenesis. Required for meiotic entry and germline differentiation, at the pachytene stage of meiosis I of female germline regardless of the sex of the soma. May act by regulating translation of specific mRNAs, possibly by binding to their 3'-UTR. The polypeptide is DAZ protein 1 (daz-1) (Caenorhabditis elegans).